A 961-amino-acid chain; its full sequence is Probable inorganic carbon transporter subunit DabA (961 aa).

Zn(2+) contacts are provided by cysteine 406, aspartate 408, histidine 653, and cysteine 668.

It belongs to the inorganic carbon transporter (TC 9.A.2) DabA family. As to quaternary structure, forms a complex with DabB. Requires Zn(2+) as cofactor.

Its subcellular location is the cell inner membrane. In terms of biological role, part of an energy-coupled inorganic carbon pump. The chain is Probable inorganic carbon transporter subunit DabA from Hydrogenobaculum sp. (strain Y04AAS1).